A 23-amino-acid chain; its full sequence is Lycosin-II (23 aa).

The residue at position 21 (Leu-21) is a Leucine amide.

Expressed by the venom gland.

It is found in the secreted. The protein localises to the target cell membrane. In terms of biological role, has strong antibacterial activity and biofilm inhibition effects against Gram-positive and -negative bacteria including E.coli, S.epidermidis, and A.baumannii and oxacillin-resistant S.aureus and meropenem-resistant P.aeruginosa. Is not cytotoxic against human foreskin fibroblast Hs27 or hemolytic against mammalian red blood cells. Its mechanism of action involves binding to lipoteichoic acid and lipopolysaccharide of Gram-positive and Gram-negative bacterial membranes, respectively, to destroy the bacterial membrane. In addition, it shows anti-inflammatory effects by inhibiting the expression of pro-inflammatory cytokines that are increased during bacterial infection in Hs27 cells. This is Lycosin-II from Lycosa singoriensis (Wolf spider).